Consider the following 707-residue polypeptide: Alpha-hemolysin translocation ATP-binding protein HlyB (707 aa).

Positions 3 to 125 constitute a Peptidase C39 domain; it reads SCHKIDYGLY…ALYQGHIILI (123 aa). His83 is an active-site residue. The ABC transmembrane type-1 domain occupies 154-436; that stretch reads FIETLVVSVF…LAQIWQDFQQ (283 aa). Helical transmembrane passes span 158–178, 191–211, 269–289, 295–315, and 388–408; these read LVVS…FQVV, LNVI…LSGL, ALTS…MWYY, LVIL…SPIL, and VMII…LSIG. Positions 468-703 constitute an ABC transporter domain; it reads ITFRNIRFRY…PESLYSYLYQ (236 aa). ATP is bound at residue 502–509; it reads GRSGSGKS.

The protein belongs to the ABC transporter superfamily. Protein-1 exporter (TC 3.A.1.109) family. Homodimer.

Its subcellular location is the cell inner membrane. Part of the ABC transporter complex HlyBD involved in hemolysin export. Transmembrane domains (TMD) form a pore in the inner membrane and the ATP-binding domain (NBD) is responsible for energy generation. The polypeptide is Alpha-hemolysin translocation ATP-binding protein HlyB (hlyB) (Escherichia coli).